Reading from the N-terminus, the 689-residue chain is Histone-lysine N-methyltransferase MEDEA (689 aa).

Disordered stretches follow at residues 1-20, 51-73, and 169-188; these read MEKE…LNQI, HQSF…KSLL, and ELSS…EIKK. The interval 1-109 is interaction with FIE; that stretch reads MEKENHEDDG…DEDQDYALEE (109 aa). A compositionally biased stretch (acidic residues) spans 171-184; it reads SSEEDEEDEEEDEE. One can recognise an SANT domain in the interval 339–389; the sequence is NNTMWTPVEKDLYLKGIEIFGRNSCDVALNILRGLKTCLEIYNYMREQDQC. The region spanning 428–532 is the CXC domain; sequence RYPPALKKTT…TLGETPVQIQ (105 aa). One can recognise an SET domain in the interval 544-659; the sequence is KKILIGKSDV…EGEELFFDYC (116 aa). Positions 666–689 are disordered; it reads DWSRGREPRKTGASKRSKEARPAR.

This sequence belongs to the class V-like SAM-binding methyltransferase superfamily. Histone-lysine methyltransferase family. EZ subfamily. As to quaternary structure, interacts directly with FIE via its N-terminal domain. These two proteins are probably indirectly associated with FIS2. In plants, PcG complexes are probably composed of a member of the EZ family (CLF or MEA), FIE, and a member of the VEFS family (FIS2, VRN2 or EMF2). Interacts with TAF13. Expressed in unpollinated siliques that contain maturing gametophytes. Not expressed at early stages of floral development during early megagametogenesis.

It localises to the nucleus. The enzyme catalyses L-lysyl(27)-[histone H3] + 3 S-adenosyl-L-methionine = N(6),N(6),N(6)-trimethyl-L-lysyl(27)-[histone H3] + 3 S-adenosyl-L-homocysteine + 3 H(+). In terms of biological role, polycomb group (PcG) protein. Catalytic subunit of some PcG multiprotein complex, which methylates 'Lys-27' of histone H3, leading to transcriptional repression of the affected target genes. Required to prevent the proliferation of the central cell of the female gametophyte by repressing target genes before fertilization. After fertilization, it probably also regulates the embryo and endosperm proliferation and anteroposterior organization during seed development. PcG proteins act by forming multiprotein complexes, which are required to maintain the transcriptionally repressive state of homeotic genes throughout development. PcG proteins are not required to initiate repression, but to maintain it during later stages of development. Interacts with the promoter and repress the transcription of genes such as PHE1 and PHE2, that are paternally active and maternally silenced genes. The polypeptide is Histone-lysine N-methyltransferase MEDEA (MEA) (Arabidopsis thaliana (Mouse-ear cress)).